A 588-amino-acid polypeptide reads, in one-letter code: Oxidoreductase NdmD (588 aa).

Residues 9–114 (WFPIATTEDL…VREKHGFIWT (106 aa)) enclose the Rieske domain. Positions 50, 52, 69, and 72 each coordinate [2Fe-2S] cluster. The region spanning 272 to 373 (PTHYICEVVT…TLPRNGFPLV (102 aa)) is the FAD-binding FR-type domain. The 2Fe-2S ferredoxin-type domain occupies 503–588 (YEVELKKTGQ…CKSKKIVLDL (86 aa)). [2Fe-2S] cluster contacts are provided by cysteine 537, cysteine 542, cysteine 545, and cysteine 575.

The cofactor is [2Fe-2S] cluster.

Functionally, involved in the caffeine degradation, which is the essential first step for assimilating the carbon and nitrogen in caffeine. Catalyzes the oxidation of NADH and transfers electrons to NdmA and NdmB, which catalyze the N-demethylation reactions. This Pseudomonas putida (Arthrobacter siderocapsulatus) protein is Oxidoreductase NdmD (ndmD).